A 385-amino-acid chain; its full sequence is Lipid-A-disaccharide synthase (385 aa).

This sequence belongs to the LpxB family.

It catalyses the reaction a lipid X + a UDP-2-N,3-O-bis[(3R)-3-hydroxyacyl]-alpha-D-glucosamine = a lipid A disaccharide + UDP + H(+). It participates in bacterial outer membrane biogenesis; LPS lipid A biosynthesis. In terms of biological role, condensation of UDP-2,3-diacylglucosamine and 2,3-diacylglucosamine-1-phosphate to form lipid A disaccharide, a precursor of lipid A, a phosphorylated glycolipid that anchors the lipopolysaccharide to the outer membrane of the cell. This Xylella fastidiosa (strain M23) protein is Lipid-A-disaccharide synthase.